A 139-amino-acid polypeptide reads, in one-letter code: GSK3B-interacting protein (139 aa).

A required for PRKAR2A interaction; contributes to a protective effect against H(2)O(2)-induced apoptosis region spans residues 41–45; that stretch reads VNDVL. Positions 115–139 are interaction with GSK3B and acts as a GSK3B inhibitor; it reads SPAYREAFGNALLQRLEALKREGQS.

The protein belongs to the GSKIP family. As to quaternary structure, forms a complex composed of PRKAR2A or PRKAR2B, GSK3B and GSKIP through GSKIP interaction; facilitates PKA-induced phosphorylation of GSK3B leading to GSK3B inactivation; recruits DNM1L through GSK3B for PKA-mediated phosphorylation of DNM1L; promotes beta-catenin degradation through GSK3B-induced phosphorylation of beta-catenin; stabilizes beta-catenin and enhances Wnt-induced signaling through PKA-induced phosphorylation of beta-catenin. Interacts with GSK3B; induces GSK3B-mediated phosphorylation of GSKIP and inhibits GSK3B kinase activity. Phosphorylated by GSK3B.

The protein resides in the cytoplasm. Its subcellular location is the nucleus. Functionally, A-kinase anchoring protein for GSK3B and PKA that regulates or facilitates their kinase activity towards their targets. The ternary complex enhances Wnt-induced signaling by facilitating the GSK3B- and PKA-induced phosphorylation of beta-catenin leading to beta-catenin degradation and stabilization respectively. Upon cAMP activation, the ternary complex contributes to neuroprotection against oxidative stress-induced apoptosis by facilitating the PKA-induced phosphorylation of DML1 and PKA-induced inactivation of GSK3B. During neurite outgrowth promotes neuron proliferation; while increases beta-catenin-induced transcriptional activity through GSK3B kinase activity inhibition, reduces N-cadherin level to promote cell cycle progression. May play a role in cleft palate formation and is required for postnatal life through modulation of the activity of GSK3B during development. The sequence is that of GSK3B-interacting protein from Bos taurus (Bovine).